Reading from the N-terminus, the 192-residue chain is MTEYILLIISTALINNFVLVKFLGLCPFMGVSKKIETAIGMSLATMFVLTVASISAYLIDTYILTPLSATFLRTLVFILVIAVVVQFTEMVINKTSPTLYRLLGIFLPLITTNCAVLGVALLNINQAHTLTQSVIYGFGASLGFGLVLVLFAALRERLAAADVPHVFKGASIALITAGLMSLAFMGFTGLVR.

6 helical membrane-spanning segments follow: residues 5–25 (ILLIISTALINNFVLVKFLGL), 39–59 (IGMSLATMFVLTVASISAYLI), 63–83 (ILTPLSATFLRTLVFILVIAV), 102–122 (LLGIFLPLITTNCAVLGVALL), 134–154 (VIYGFGASLGFGLVLVLFAAL), and 171–191 (SIALITAGLMSLAFMGFTGLV).

The protein belongs to the NqrDE/RnfAE family. The complex is composed of six subunits: RnfA, RnfB, RnfC, RnfD, RnfE and RnfG.

The protein localises to the cell inner membrane. Functionally, part of a membrane-bound complex that couples electron transfer with translocation of ions across the membrane. This is Ion-translocating oxidoreductase complex subunit A from Pasteurella multocida (strain Pm70).